The sequence spans 484 residues: Glutamate mutase epsilon subunit (484 aa).

Arginine 66 is an L-glutamate binding site. Glycine 68 lines the adenosylcob(III)alamin pocket. Residue arginine 100 coordinates L-glutamate. Asparagine 123 is a binding site for adenosylcob(III)alamin. Residues 149 to 150 (RH), glutamate 171, and tyrosine 177 each bind L-glutamate. Residue proline 180 coordinates adenosylcob(III)alamin. L-glutamate is bound at residue tyrosine 181. Phenylalanine 297, lysine 326, glutamate 330, and isoleucine 334 together coordinate adenosylcob(III)alamin.

Belongs to the methylaspartate mutase GlmE subunit family. Heterotetramer composed of 2 epsilon subunits (GlmE) and 2 sigma subunits (GlmS). GlmE exists as a homodimer and GlmS as a monomer. Adenosylcob(III)alamin serves as cofactor.

The catalysed reaction is (2S,3S)-3-methyl-L-aspartate = L-glutamate. The protein operates within amino-acid degradation; L-glutamate degradation via mesaconate pathway; acetate and pyruvate from L-glutamate: step 1/4. Its function is as follows. Catalyzes the carbon skeleton rearrangement of L-glutamate to L-threo-3-methylaspartate ((2S,3S)-3-methylaspartate). The polypeptide is Glutamate mutase epsilon subunit (Desulfitobacterium hafniense (strain Y51)).